The following is a 229-amino-acid chain: Biosynthetic peptidoglycan transglycosylase (229 aa).

A helical transmembrane segment spans residues 10 to 30 (LLLALVLVVLYQFWIFMHILW).

Belongs to the glycosyltransferase 51 family.

Its subcellular location is the cell inner membrane. The catalysed reaction is [GlcNAc-(1-&gt;4)-Mur2Ac(oyl-L-Ala-gamma-D-Glu-L-Lys-D-Ala-D-Ala)](n)-di-trans,octa-cis-undecaprenyl diphosphate + beta-D-GlcNAc-(1-&gt;4)-Mur2Ac(oyl-L-Ala-gamma-D-Glu-L-Lys-D-Ala-D-Ala)-di-trans,octa-cis-undecaprenyl diphosphate = [GlcNAc-(1-&gt;4)-Mur2Ac(oyl-L-Ala-gamma-D-Glu-L-Lys-D-Ala-D-Ala)](n+1)-di-trans,octa-cis-undecaprenyl diphosphate + di-trans,octa-cis-undecaprenyl diphosphate + H(+). It functions in the pathway cell wall biogenesis; peptidoglycan biosynthesis. Peptidoglycan polymerase that catalyzes glycan chain elongation from lipid-linked precursors. The chain is Biosynthetic peptidoglycan transglycosylase from Methylobacillus flagellatus (strain ATCC 51484 / DSM 6875 / VKM B-1610 / KT).